Reading from the N-terminus, the 468-residue chain is ATP synthase subunit beta (468 aa).

An ATP-binding site is contributed by 155 to 162; sequence GGAGVGKT.

Belongs to the ATPase alpha/beta chains family. As to quaternary structure, F-type ATPases have 2 components, CF(1) - the catalytic core - and CF(0) - the membrane proton channel. CF(1) has five subunits: alpha(3), beta(3), gamma(1), delta(1), epsilon(1). CF(0) has three main subunits: a(1), b(2) and c(9-12). The alpha and beta chains form an alternating ring which encloses part of the gamma chain. CF(1) is attached to CF(0) by a central stalk formed by the gamma and epsilon chains, while a peripheral stalk is formed by the delta and b chains.

The protein resides in the cell membrane. The catalysed reaction is ATP + H2O + 4 H(+)(in) = ADP + phosphate + 5 H(+)(out). Produces ATP from ADP in the presence of a proton gradient across the membrane. The catalytic sites are hosted primarily by the beta subunits. This Streptococcus suis (strain 98HAH33) protein is ATP synthase subunit beta.